The following is a 226-amino-acid chain: SPI-1 type 3 secretion system stator protein (226 aa).

The core secretion machinery of the T3SS is composed of approximately 20 different proteins, including cytoplasmic components, a base, an export apparatus and a needle. This subunit is part of the cytosolic complex. Interacts directly with InvC/SctN1 (T3SS-1 ATPase) and SpaO/SctQ (the major sorting platform component).

Its subcellular location is the cytoplasm. Its function is as follows. Component of the type III secretion system (T3SS), also called injectisome, which is used to inject bacterial effector proteins into eukaryotic host cells. Acts as a regulator of the InvC/SctN1 ATPase activity. Required for invasion and secretion. This is SPI-1 type 3 secretion system stator protein from Salmonella typhimurium (strain SL1344).